The following is a 176-amino-acid chain: Large ribosomal subunit protein uL6 (176 aa).

Positions 156–170 are enriched in basic and acidic residues; that stretch reads YKGKGVRYADEQVRR. The disordered stretch occupies residues 156-176; it reads YKGKGVRYADEQVRRKEAKKK.

Belongs to the universal ribosomal protein uL6 family. As to quaternary structure, part of the 50S ribosomal subunit.

In terms of biological role, this protein binds to the 23S rRNA, and is important in its secondary structure. It is located near the subunit interface in the base of the L7/L12 stalk, and near the tRNA binding site of the peptidyltransferase center. This Shewanella woodyi (strain ATCC 51908 / MS32) protein is Large ribosomal subunit protein uL6.